A 534-amino-acid chain; its full sequence is MTKYIFVTGGVVSSIGKGIVAASLGRLLKNRGLKVTIQKFDPYINIDPGTMSPYQHGEVYVTDDGAETDLDLGHYERFIDINLNKYSNVTTGKIYSEVLRKERKGEYLGATVQVIPHITDALKEKIKRAASTTDSDVIITEVGGTVGDIESLPFLEALRQMKTDVGSENVMYIHTTLLPYLKAAGEMKTKPTQHSVKELRGLGIQPNMLVIRTEEPVEQGIKNKLAQFCDVNSEAVIESRDVEHLYQIPLNLQAQSMDQIVCDHLKLNAPQADMTEWSAMVDKVMNLRKTTKIALVGKYVELPDAYLSVVEALKHSGYANDTAIDLKWVNANDVTVDNAADLLGDADGIIVPGGFGQRGTEGKIQAIRYARENDVPMLGICLGMQLTCVEFARHVLNMEGANSFELEPSTKYPIIDIMRDQIDIEDMGGTLRLGLYPCKLKPGSKAAMAYNNQEVVQRRHRHRYEFNNKFRPEFEAAGFVFSGVSPDNRLVEIVELKEKKFFVAAQYHPELQSRPNRPEELYTAFVTAAIKNSN.

Positions 1–267 (MTKYIFVTGG…DQIVCDHLKL (267 aa)) are amidoligase domain. CTP is bound at residue Ser-13. Ser-13 is a UTP binding site. 14–19 (SIGKGI) serves as a coordination point for ATP. Residue Tyr-54 participates in L-glutamine binding. Residue Asp-71 participates in ATP binding. Residues Asp-71 and Glu-141 each coordinate Mg(2+). CTP contacts are provided by residues 148–150 (DIE), 188–193 (KTKPTQ), and Lys-224. UTP is bound by residues 188-193 (KTKPTQ) and Lys-224. ATP is bound at residue 240 to 242 (RDV). The Glutamine amidotransferase type-1 domain occupies 292–534 (KIALVGKYVE…FVTAAIKNSN (243 aa)). Position 354 (Gly-354) interacts with L-glutamine. Cys-381 (nucleophile; for glutamine hydrolysis) is an active-site residue. Residues 382 to 385 (LGMQ), Glu-405, and Arg-463 contribute to the L-glutamine site. Residues His-508 and Glu-510 contribute to the active site.

This sequence belongs to the CTP synthase family. As to quaternary structure, homotetramer.

The catalysed reaction is UTP + L-glutamine + ATP + H2O = CTP + L-glutamate + ADP + phosphate + 2 H(+). It catalyses the reaction L-glutamine + H2O = L-glutamate + NH4(+). The enzyme catalyses UTP + NH4(+) + ATP = CTP + ADP + phosphate + 2 H(+). It functions in the pathway pyrimidine metabolism; CTP biosynthesis via de novo pathway; CTP from UDP: step 2/2. Its activity is regulated as follows. Allosterically activated by GTP, when glutamine is the substrate; GTP has no effect on the reaction when ammonia is the substrate. The allosteric effector GTP functions by stabilizing the protein conformation that binds the tetrahedral intermediate(s) formed during glutamine hydrolysis. Inhibited by the product CTP, via allosteric rather than competitive inhibition. Its function is as follows. Catalyzes the ATP-dependent amination of UTP to CTP with either L-glutamine or ammonia as the source of nitrogen. Regulates intracellular CTP levels through interactions with the four ribonucleotide triphosphates. This is CTP synthase from Streptococcus pyogenes serotype M2 (strain MGAS10270).